Here is a 658-residue protein sequence, read N- to C-terminus: DNA mismatch repair protein MutL (658 aa).

Positions 114–130 (RQEDSSHATQVKAEDGK) are enriched in basic and acidic residues. Disordered regions lie at residues 114–137 (RQED…PTAA), 369–401 (DYPT…APQQ), and 438–457 (FGNM…LSDG).

This sequence belongs to the DNA mismatch repair MutL/HexB family.

Its function is as follows. This protein is involved in the repair of mismatches in DNA. It is required for dam-dependent methyl-directed DNA mismatch repair. May act as a 'molecular matchmaker', a protein that promotes the formation of a stable complex between two or more DNA-binding proteins in an ATP-dependent manner without itself being part of a final effector complex. The protein is DNA mismatch repair protein MutL of Neisseria meningitidis serogroup A / serotype 4A (strain DSM 15465 / Z2491).